Here is a 123-residue protein sequence, read N- to C-terminus: cAMP-responsive element-binding protein-like 2 (123 aa).

The disordered stretch occupies residues 1–24 (MDDSKVVGGKVKKPGKRGRKPAKI). The segment covering 10–21 (KVKKPGKRGRKP) has biased composition (basic residues). One can recognise a bZIP domain in the interval 23–86 (KIDLKAKLER…MAMDQGKIPS (64 aa)). Residues 29–60 (KLERSRQSARECRARKKLRYQYLEELVSSRER) form a basic motif region. The leucine-zipper stretch occupies residues 62-69 (ICALREEL). The tract at residues 93–123 (TGEEQNKSQQNSSRHPKAGKTDANTNSLVGN) is disordered. The span at 114 to 123 (DANTNSLVGN) shows a compositional bias: polar residues.

It belongs to the bZIP family. ATF subfamily. As to quaternary structure, interacts with CREB1; regulates CREB1 phosphorylation, stability and transcriptional activity. Post-translationally, phosphorylated by AMPK.

The protein resides in the nucleus. In terms of biological role, probable regulator of CREB1 transcriptional activity which is involved in adipose cells differentiation. May also play a regulatory role in the cell cycle. The chain is cAMP-responsive element-binding protein-like 2 (Crebl2) from Rattus norvegicus (Rat).